Reading from the N-terminus, the 110-residue chain is Large ribosomal subunit protein uL22 (110 aa).

It belongs to the universal ribosomal protein uL22 family. In terms of assembly, part of the 50S ribosomal subunit.

Its function is as follows. This protein binds specifically to 23S rRNA; its binding is stimulated by other ribosomal proteins, e.g. L4, L17, and L20. It is important during the early stages of 50S assembly. It makes multiple contacts with different domains of the 23S rRNA in the assembled 50S subunit and ribosome. In terms of biological role, the globular domain of the protein is located near the polypeptide exit tunnel on the outside of the subunit, while an extended beta-hairpin is found that lines the wall of the exit tunnel in the center of the 70S ribosome. The sequence is that of Large ribosomal subunit protein uL22 from Baumannia cicadellinicola subsp. Homalodisca coagulata.